The sequence spans 636 residues: Ketocytochalasin monooxygenase (636 aa).

FAD is bound by residues D125, T133–W136, D145, Y151, and I195. A143–D145 contributes to the NADP(+) binding site. NADP(+)-binding positions include T279–Q285, R302–T303, and K420–R421. W534 lines the FAD pocket.

Belongs to the FAD-binding monooxygenase family. Requires FAD as cofactor.

It catalyses the reaction ketocytochalasin + NADPH + O2 + H(+) = iso-precytochalasin + NADP(+) + H2O. The catalysed reaction is iso-precytochalasin + NADPH + O2 + H(+) = cytochalasin Z16 + NADP(+) + H2O. It functions in the pathway mycotoxin biosynthesis. In terms of biological role, ketocytochalasin monooxygenase; part of the gene cluster that mediates the biosynthesis of a family of the mycotoxins cytochalasins E and K. The hybrid PKS-NRPS synthetase ccsA and the enoyl reductase ccsC are responsible for fusion of phenylalanine with an octaketide backbone and subsequent release of the stable tetramic acid precursor. The polyketide synthase module (PKS) of the PKS-NRPS ccsA is responsible for the synthesis of the octaketide backbone. The downstream nonribosomal peptide synthetase (NRPS) amidates the carboxyl end of the octaketide with a phenylalanine. A reductase-like domain (R) at the C-terminus catalyzes the reductive release of the polyketide-amino acid intermediate. Because ccsA lacks a designated enoylreductase (ER) domain, the required activity is provided the enoyl reductase ccsC. Upon formation of the 11-membered carbocycle-fused perhydroisoindolone intermediate, a number of oxidative steps are required to afford the final cytochalasin E and K, including two hydroxylations at C17 and C18, one alcohol oxidation at C17, one epoxidation at C6 and C7 and two Baeyer-Villiger oxidations. The oxidative modification at C17, C18 and the C6-C7 epoxidation are likely to be catalyzed by the two cytochrome P450 oxygenases ccsD and ccsG. CcsD may be responsible for the epoxidation of the C6-C7 double bond. CcsG may be responsible for the successive oxidative modifications at C17 and C18. The double Baeyer-Villiger oxidations of ketocytochalasin to precytochalasin and cytochalasin Z(16) are among the final steps leading to cytochalasin E and K and are catalyzed by ccsB. The first oxygen insertion step follows that of the classic BVMO mechanism, generating the ester precytochalasin. Release of precytochalasin into an aqueous environment can generate the shunt product iso-precytochalasin through spontaneous isomerization. Alternatively, precytochalasin can undergo further oxidation by ccsB to yield the in-line carbonate-containing cytochalasin Z(16). Cytochalasin Z(16) is a precursor to cytochalasin E and cytochalasin K, whereas iso-precytochalasin is a precursor to cytochalasin Z(17) and rosellichalasin. The hydrolyase ccsE may catalyze hydrolysis of epoxide bond in cytochalasin E to afford cytochalasin K. The function of ccsF has not been assigned but it may play a role in post-PKS-NRPS biosynthetic step, resistance or transport of cytochalasins and related PKS-NRPS products. The polypeptide is Ketocytochalasin monooxygenase (Aspergillus clavatus (strain ATCC 1007 / CBS 513.65 / DSM 816 / NCTC 3887 / NRRL 1 / QM 1276 / 107)).